The chain runs to 332 residues: DnAJ-like protein slr0093 (332 aa).

Residues 6–75 form the J domain; that stretch reads FKDYYQILGV…RQKYDQFGRY (70 aa).

The sequence is that of DnAJ-like protein slr0093 from Synechocystis sp. (strain ATCC 27184 / PCC 6803 / Kazusa).